Here is a 789-residue protein sequence, read N- to C-terminus: Polyribonucleotide nucleotidyltransferase (789 aa).

Residues Asp494 and Asp500 each contribute to the Mg(2+) site. Positions 561-620 constitute a KH domain; it reads PRIESIFINKDKIRNVIGSGGKNIREICEKTGARVEIMQDGTVMIYAINNDAVEYAKNMI. An S1 motif domain is found at 630–697; the sequence is GKVFDGTVIE…DREYVQLSMR (68 aa). A disordered region spans residues 709–789; that stretch reads GELYNIRKTN…NEVPRKPRFF (81 aa). Over residues 737-749 the composition is skewed to basic residues; that stretch reads SEKKRRGSGRSRR. Residues 763 to 780 are compositionally biased toward low complexity; it reads NNGFGNGNRSFNDNRNGN.

This sequence belongs to the polyribonucleotide nucleotidyltransferase family. Requires Mg(2+) as cofactor.

The protein resides in the cytoplasm. The catalysed reaction is RNA(n+1) + phosphate = RNA(n) + a ribonucleoside 5'-diphosphate. Involved in mRNA degradation. Catalyzes the phosphorolysis of single-stranded polyribonucleotides processively in the 3'- to 5'-direction. In Ehrlichia ruminantium (strain Welgevonden), this protein is Polyribonucleotide nucleotidyltransferase.